The sequence spans 432 residues: RNA binding protein fox-1 homolog 2 (432 aa).

A compositionally biased stretch (low complexity) spans 1 to 21 (MAEGGQAQQQPPQLGPGAAAR). The disordered stretch occupies residues 1–169 (MAEGGQAQQQ…STPKRLHVSN (169 aa)). 2 stretches are compositionally biased toward polar residues: residues 60 to 69 (QGNQEPTTTP) and 101 to 121 (YAGQ…PHGE). Positions 122 to 159 (QSSNSPSNQNGSLTQTEGGAQTDGQQSQTQSSENSESK) are enriched in low complexity. Positions 163-239 (KRLHVSNIPF…RKIEVNNATA (77 aa)) constitute an RRM domain. An Omega-N-methylarginine modification is found at Arg-323. Arg-339 and Arg-371 each carry asymmetric dimethylarginine. Residues Arg-423 and Arg-428 each carry the asymmetric dimethylarginine; alternate modification. Residues Arg-423 and Arg-428 each carry the omega-N-methylarginine; alternate modification.

In terms of assembly, interacts with ER-alpha N-terminal activation domain. Interacts with RBPMS; the interaction allows cooperative assembly of stable cell-specific alternative splicing regulatory complexes.

Its subcellular location is the nucleus. The protein localises to the cytoplasm. Functionally, RNA-binding protein that regulates alternative splicing events by binding to 5'-UGCAUGU-3' elements. Prevents binding of U2AF2 to the 3'-splice site. Regulates alternative splicing of tissue-specific exons and of differentially spliced exons during erythropoiesis. Seems to act as a coregulatory factor of ER-alpha. Together with RNA binding proteins RBPMS and MBNL1/2, activates vascular smooth muscle cells alternative splicing events. This Rattus norvegicus (Rat) protein is RNA binding protein fox-1 homolog 2 (Rbfox2).